The primary structure comprises 37 residues: Large ribosomal subunit protein bL36 (37 aa).

This sequence belongs to the bacterial ribosomal protein bL36 family.

This is Large ribosomal subunit protein bL36 from Mycoplasmopsis synoviae (strain 53) (Mycoplasma synoviae).